The primary structure comprises 222 residues: Cytidylate kinase (222 aa).

10–18 contacts ATP; that stretch reads GPAGAGKST.

Belongs to the cytidylate kinase family. Type 1 subfamily.

It localises to the cytoplasm. The catalysed reaction is CMP + ATP = CDP + ADP. It carries out the reaction dCMP + ATP = dCDP + ADP. The protein is Cytidylate kinase of Halalkalibacterium halodurans (strain ATCC BAA-125 / DSM 18197 / FERM 7344 / JCM 9153 / C-125) (Bacillus halodurans).